The primary structure comprises 216 residues: ADP-ribosylation factor D (216 aa).

Positions 188–204 are enriched in low complexity; it reads SKFSFSNKSKQQKSNSQ. The segment at 188–216 is disordered; it reads SKFSFSNKSKQQKSNSQPNTPRKNIQMMT. Over residues 205–216 the composition is skewed to polar residues; the sequence is PNTPRKNIQMMT.

The protein belongs to the small GTPase superfamily. Arf family.

Its subcellular location is the golgi apparatus. Functionally, GTP-binding protein involved in protein trafficking; may modulate vesicle budding and uncoating within the Golgi apparatus. This Dictyostelium discoideum (Social amoeba) protein is ADP-ribosylation factor D (arrD).